The sequence spans 329 residues: MFYVEILGLLPEMAEAEVKALAELRNGTIKERDYLLVVGNVENVEIFERLGLAHEYGILLGSGDDVRDILDLVRGLEWKEIIKGTFAVRKEVMVNCAHEVKNLEKIIGGIIHSQGLRVNLSKPDTIIKVYCGRKLWIGIRIREFRGKEFDERKADRRPFSRPIALPPRIARAMVNLTRATREILDPFMGTGGMLIEAGLMGLKVYGIDIREDMVEGAKINLEYYGVKDYVVKVGDATKIKEAFPGKTFEAIATDPPYGTSTTLPMDRDELYKRALESMYSVLEGRLAIAFPSDFDALDVAETIGFKVIGRFYQRVHSSLSRYFYIMEAR.

The region spanning 40-143 (NVENVEIFER…KLWIGIRIRE (104 aa)) is the THUMP domain.

It belongs to the methyltransferase superfamily. Trm-G10 family. Monomer.

It localises to the cytoplasm. It carries out the reaction guanosine(10) in tRNA + 2 S-adenosyl-L-methionine = N(2)-dimethylguanosine(10) in tRNA + 2 S-adenosyl-L-homocysteine + 2 H(+). Catalyzes the adenosylmethionine-dependent methylation of the exocyclic amino group (N(2)) of guanosine at position 10 of various tRNAs. Acts via a two-step process that leads to the formation of either N(2)-monomethyl (m(2)G) or N(2)-dimethylguanosine (m(2)(2)G). This chain is tRNA (guanine(10)-N2)-dimethyltransferase (trmG10), found in Pyrococcus abyssi (strain GE5 / Orsay).